A 160-amino-acid polypeptide reads, in one-letter code: N-acetyltransferase Pat (160 aa).

One can recognise an N-acetyltransferase domain in the interval 5-148; it reads IKIRKATKED…VYGEMRLTER (144 aa). CoA is bound by residues Leu79, Val81, Thr87, Gly89, Gly91, Thr92, Asn118, Lys123, and Lys127.

The protein belongs to the acetyltransferase family. GNAT subfamily.

The enzyme catalyses L-lysyl-[protein] + acetyl-CoA = N(6)-acetyl-L-lysyl-[protein] + CoA + H(+). In terms of biological role, modulates activity of albA1, the major archaeal DNA compaction protein, by decreasing albA1's nucleic acid binding affinity through acetylation of 'Lys-16'. The protein is N-acetyltransferase Pat of Saccharolobus solfataricus (strain ATCC 35092 / DSM 1617 / JCM 11322 / P2) (Sulfolobus solfataricus).